Reading from the N-terminus, the 155-residue chain is 6,7-dimethyl-8-ribityllumazine synthase (155 aa).

5-amino-6-(D-ribitylamino)uracil is bound by residues Phe-24, 58 to 60 (AFE), and 82 to 84 (VII). 87–88 (ST) is a binding site for (2S)-2-hydroxy-3-oxobutyl phosphate. His-90 serves as the catalytic Proton donor. Residue Phe-115 coordinates 5-amino-6-(D-ribitylamino)uracil. Residue Arg-129 coordinates (2S)-2-hydroxy-3-oxobutyl phosphate.

It belongs to the DMRL synthase family.

It catalyses the reaction (2S)-2-hydroxy-3-oxobutyl phosphate + 5-amino-6-(D-ribitylamino)uracil = 6,7-dimethyl-8-(1-D-ribityl)lumazine + phosphate + 2 H2O + H(+). It participates in cofactor biosynthesis; riboflavin biosynthesis; riboflavin from 2-hydroxy-3-oxobutyl phosphate and 5-amino-6-(D-ribitylamino)uracil: step 1/2. In terms of biological role, catalyzes the formation of 6,7-dimethyl-8-ribityllumazine by condensation of 5-amino-6-(D-ribitylamino)uracil with 3,4-dihydroxy-2-butanone 4-phosphate. This is the penultimate step in the biosynthesis of riboflavin. This is 6,7-dimethyl-8-ribityllumazine synthase from Chlorobium limicola (strain DSM 245 / NBRC 103803 / 6330).